The sequence spans 300 residues: Ribonuclease HIII (300 aa).

Positions 86-300 constitute an RNase H type-2 domain; sequence RPRLGVDESG…FNEICDSASA (215 aa). 3 residues coordinate a divalent metal cation: Asp-92, Glu-93, and Asp-196.

The protein belongs to the RNase HII family. RnhC subfamily. Mn(2+) is required as a cofactor. It depends on Mg(2+) as a cofactor.

The protein resides in the cytoplasm. It catalyses the reaction Endonucleolytic cleavage to 5'-phosphomonoester.. Endonuclease that specifically degrades the RNA of RNA-DNA hybrids. This Chlamydia felis (strain Fe/C-56) (Chlamydophila felis) protein is Ribonuclease HIII.